A 131-amino-acid chain; its full sequence is Small ribosomal subunit protein uS8 (131 aa).

The protein belongs to the universal ribosomal protein uS8 family. As to quaternary structure, part of the 30S ribosomal subunit. Contacts proteins S5 and S12.

In terms of biological role, one of the primary rRNA binding proteins, it binds directly to 16S rRNA central domain where it helps coordinate assembly of the platform of the 30S subunit. This chain is Small ribosomal subunit protein uS8, found in Methylococcus capsulatus (strain ATCC 33009 / NCIMB 11132 / Bath).